Here is a 237-residue protein sequence, read N- to C-terminus: Ubiquinone biosynthesis O-methyltransferase (237 aa).

S-adenosyl-L-methionine is bound by residues arginine 38, glycine 58, aspartate 79, and methionine 124.

This sequence belongs to the methyltransferase superfamily. UbiG/COQ3 family.

It catalyses the reaction a 3-demethylubiquinol + S-adenosyl-L-methionine = a ubiquinol + S-adenosyl-L-homocysteine + H(+). It carries out the reaction a 3-(all-trans-polyprenyl)benzene-1,2-diol + S-adenosyl-L-methionine = a 2-methoxy-6-(all-trans-polyprenyl)phenol + S-adenosyl-L-homocysteine + H(+). It functions in the pathway cofactor biosynthesis; ubiquinone biosynthesis. Its function is as follows. O-methyltransferase that catalyzes the 2 O-methylation steps in the ubiquinone biosynthetic pathway. The chain is Ubiquinone biosynthesis O-methyltransferase from Acinetobacter baumannii (strain AB307-0294).